Here is a 173-residue protein sequence, read N- to C-terminus: Crossover junction endodeoxyribonuclease RuvC (173 aa).

Active-site residues include Asp8, Glu67, and Asp139. 3 residues coordinate Mg(2+): Asp8, Glu67, and Asp139.

The protein belongs to the RuvC family. Homodimer which binds Holliday junction (HJ) DNA. The HJ becomes 2-fold symmetrical on binding to RuvC with unstacked arms; it has a different conformation from HJ DNA in complex with RuvA. In the full resolvosome a probable DNA-RuvA(4)-RuvB(12)-RuvC(2) complex forms which resolves the HJ. Mg(2+) serves as cofactor.

Its subcellular location is the cytoplasm. It catalyses the reaction Endonucleolytic cleavage at a junction such as a reciprocal single-stranded crossover between two homologous DNA duplexes (Holliday junction).. Functionally, the RuvA-RuvB-RuvC complex processes Holliday junction (HJ) DNA during genetic recombination and DNA repair. Endonuclease that resolves HJ intermediates. Cleaves cruciform DNA by making single-stranded nicks across the HJ at symmetrical positions within the homologous arms, yielding a 5'-phosphate and a 3'-hydroxyl group; requires a central core of homology in the junction. The consensus cleavage sequence is 5'-(A/T)TT(C/G)-3'. Cleavage occurs on the 3'-side of the TT dinucleotide at the point of strand exchange. HJ branch migration catalyzed by RuvA-RuvB allows RuvC to scan DNA until it finds its consensus sequence, where it cleaves and resolves the cruciform DNA. The chain is Crossover junction endodeoxyribonuclease RuvC from Vibrio campbellii (strain ATCC BAA-1116).